The sequence spans 422 residues: Serine--tRNA ligase (422 aa).

229–231 (TAE) provides a ligand contact to L-serine. 260-262 (RKE) provides a ligand contact to ATP. Glutamate 283 is an L-serine binding site. 347–350 (EISS) is an ATP binding site. Residue serine 383 coordinates L-serine.

The protein belongs to the class-II aminoacyl-tRNA synthetase family. Type-1 seryl-tRNA synthetase subfamily. As to quaternary structure, homodimer. The tRNA molecule binds across the dimer.

Its subcellular location is the cytoplasm. The enzyme catalyses tRNA(Ser) + L-serine + ATP = L-seryl-tRNA(Ser) + AMP + diphosphate + H(+). It carries out the reaction tRNA(Sec) + L-serine + ATP = L-seryl-tRNA(Sec) + AMP + diphosphate + H(+). The protein operates within aminoacyl-tRNA biosynthesis; selenocysteinyl-tRNA(Sec) biosynthesis; L-seryl-tRNA(Sec) from L-serine and tRNA(Sec): step 1/1. Functionally, catalyzes the attachment of serine to tRNA(Ser). Is also able to aminoacylate tRNA(Sec) with serine, to form the misacylated tRNA L-seryl-tRNA(Sec), which will be further converted into selenocysteinyl-tRNA(Sec). This chain is Serine--tRNA ligase, found in Citrifermentans bemidjiense (strain ATCC BAA-1014 / DSM 16622 / JCM 12645 / Bem) (Geobacter bemidjiensis).